Consider the following 693-residue polypeptide: Homoaconitase, mitochondrial (693 aa).

Residues 1 to 17 (MFRVQRLRMFSTSRALY) constitute a mitochondrion transit peptide. C338, C405, and C408 together coordinate [4Fe-4S] cluster.

It belongs to the aconitase/IPM isomerase family. It depends on [4Fe-4S] cluster as a cofactor.

The protein resides in the mitochondrion. It carries out the reaction (2R,3S)-homoisocitrate = cis-homoaconitate + H2O. It participates in amino-acid biosynthesis; L-lysine biosynthesis via AAA pathway; L-alpha-aminoadipate from 2-oxoglutarate: step 3/5. In terms of biological role, catalyzes the reversible hydration of cis-homoaconitate to (2R,3S)-homoisocitrate, a step in the alpha-aminoadipate pathway for lysine biosynthesis. This Kluyveromyces lactis (strain ATCC 8585 / CBS 2359 / DSM 70799 / NBRC 1267 / NRRL Y-1140 / WM37) (Yeast) protein is Homoaconitase, mitochondrial (LYS4).